The sequence spans 139 residues: MSTEEEYIKLLDRLYSKLPERVQKVSGQSLPNLIILSIGNNTIIKNFSEYCDRIRREDKLCAKFILKELAAPGNVDENGQLVIQGKFSSASINKIMERFIKTYVQCSTCKSLDTVLIKEKKAWYISCLACGAKTPVKPL.

This sequence belongs to the eIF-2-beta/eIF-5 family. In terms of assembly, heterotrimer composed of an alpha, a beta and a gamma chain.

Functionally, eIF-2 functions in the early steps of protein synthesis by forming a ternary complex with GTP and initiator tRNA. The chain is Translation initiation factor 2 subunit beta from Sulfurisphaera tokodaii (strain DSM 16993 / JCM 10545 / NBRC 100140 / 7) (Sulfolobus tokodaii).